An 84-amino-acid polypeptide reads, in one-letter code: Putative membrane protein insertion efficiency factor (84 aa).

The protein belongs to the UPF0161 family.

It is found in the cell inner membrane. In terms of biological role, could be involved in insertion of integral membrane proteins into the membrane. In Shewanella loihica (strain ATCC BAA-1088 / PV-4), this protein is Putative membrane protein insertion efficiency factor.